A 103-amino-acid chain; its full sequence is MAGGKGGKGMGKVGAKRHSKRSNKASIEGITKPAIRRLARRGGVKRISSFIYDDSRQVLKSFLENVVRDAVTYTEHARRKTVTAMDVVYALKRQGRTLYGFGG.

Over residues 1-12 the composition is skewed to gly residues; sequence MAGGKGGKGMGK. A disordered region spans residues 1-29; the sequence is MAGGKGGKGMGKVGAKRHSKRSNKASIEG. N6-acetyllysine is present on residues K5, K8, K12, and K16. Basic residues predominate over residues 14–23; the sequence is GAKRHSKRSN. A DNA-binding region spans residues 16–21; that stretch reads KRHSKR.

The protein belongs to the histone H4 family. In terms of assembly, the nucleosome is a histone octamer containing two molecules each of H2A, H2B, H3 and H4 assembled in one H3-H4 heterotetramer and two H2A-H2B heterodimers. The octamer wraps approximately 147 bp of DNA.

The protein resides in the nucleus. Its subcellular location is the chromosome. Its function is as follows. Core component of nucleosome. Nucleosomes wrap and compact DNA into chromatin, limiting DNA accessibility to the cellular machineries which require DNA as a template. Histones thereby play a central role in transcription regulation, DNA repair, DNA replication and chromosomal stability. DNA accessibility is regulated via a complex set of post-translational modifications of histones, also called histone code, and nucleosome remodeling. In Tetrahymena pyriformis, this protein is Histone H4, major.